A 101-amino-acid polypeptide reads, in one-letter code: Urease subunit beta (101 aa).

Belongs to the urease beta subunit family. Heterotrimer of UreA (gamma), UreB (beta) and UreC (alpha) subunits. Three heterotrimers associate to form the active enzyme.

Its subcellular location is the cytoplasm. It carries out the reaction urea + 2 H2O + H(+) = hydrogencarbonate + 2 NH4(+). It functions in the pathway nitrogen metabolism; urea degradation; CO(2) and NH(3) from urea (urease route): step 1/1. The protein is Urease subunit beta of Granulibacter bethesdensis (strain ATCC BAA-1260 / CGDNIH1).